A 181-amino-acid chain; its full sequence is GTPase RhebL1 (181 aa).

GTP contacts are provided by residues 30–36 (LEDYDPT), Gly61, 117–120 (NKAD), and 147–148 (SA). The Effector region motif lies at 33-41 (YDPTVENTY). Position 36 (Thr36) interacts with Mg(2+). Residue Cys178 is modified to Cysteine methyl ester. Cys178 is lipidated: S-farnesyl cysteine. Residues 179–181 (HLM) constitute a propeptide, removed in mature form.

This sequence belongs to the small GTPase superfamily. Rheb family. As to quaternary structure, interacts with MTOR.

Its subcellular location is the endomembrane system. It is found in the cytoplasm. It catalyses the reaction GTP + H2O = GDP + phosphate + H(+). Its function is as follows. Binds GTP and exhibits intrinsic GTPase activity. May activate NF-kappa-B-mediated gene transcription. Promotes signal transduction through MTOR, activates RPS6KB1, and is a downstream target of the small GTPase-activating proteins TSC1 and TSC2. The chain is GTPase RhebL1 (RHEBL1) from Bos taurus (Bovine).